We begin with the raw amino-acid sequence, 458 residues long: Glutamate--tRNA ligase 2 (458 aa).

Positions 20 to 30 match the 'HIGH' region motif; the sequence is PSPTGLIHVGN. Positions 251–255 match the 'KMSKS' region motif; that stretch reads GLSKR. Position 254 (lysine 254) interacts with ATP.

The protein belongs to the class-I aminoacyl-tRNA synthetase family. Glutamate--tRNA ligase type 1 subfamily. In terms of assembly, monomer.

It is found in the cytoplasm. It catalyses the reaction tRNA(Glu) + L-glutamate + ATP = L-glutamyl-tRNA(Glu) + AMP + diphosphate. Catalyzes the attachment of glutamate to tRNA(Glu) in a two-step reaction: glutamate is first activated by ATP to form Glu-AMP and then transferred to the acceptor end of tRNA(Glu). This chain is Glutamate--tRNA ligase 2, found in Xanthobacter autotrophicus (strain ATCC BAA-1158 / Py2).